The following is a 1175-amino-acid chain: 1-phosphatidylinositol 4,5-bisphosphate phosphodiesterase beta-4 (1175 aa).

Residue alanine 2 is modified to N-acetylalanine. Residues glutamine 313 to lysine 463 enclose the PI-PLC X-box domain. Active-site residues include histidine 328 and histidine 375. The segment at glutamate 482–histidine 511 is disordered. The segment covering leucine 493–glutamate 508 has biased composition (acidic residues). Residues leucine 565–arginine 681 enclose the PI-PLC Y-box domain. One can recognise a C2 domain in the interval aspartate 684–leucine 809. Disordered stretches follow at residues alanine 863–proline 895 and lysine 1082–leucine 1110. 2 stretches are compositionally biased toward polar residues: residues alanine 881 to proline 895 and methionine 1085 to aspartate 1094. At threonine 886 the chain carries Phosphothreonine. Residues lysine 1095–glutamate 1109 show a composition bias toward basic and acidic residues.

Ca(2+) is required as a cofactor. As to expression, preferentially expressed in the retina.

It is found in the cell membrane. The enzyme catalyses a 1,2-diacyl-sn-glycero-3-phospho-(1D-myo-inositol-4,5-bisphosphate) + H2O = 1D-myo-inositol 1,4,5-trisphosphate + a 1,2-diacyl-sn-glycerol + H(+). It catalyses the reaction a 1,2-diacyl-sn-glycero-3-phospho-(1D-myo-inositol) + H2O = 1D-myo-inositol 1-phosphate + a 1,2-diacyl-sn-glycerol + H(+). Its function is as follows. Activated phosphatidylinositol-specific phospholipase C enzymes catalyze the production of the second messenger molecules diacylglycerol (DAG) and inositol 1,4,5-trisphosphate (IP3) involved in G-protein coupled receptor signaling pathways. PLCB4 is a direct effector of the endothelin receptor signaling pathway that plays an essential role in lower jaw and middle ear structures development. The protein is 1-phosphatidylinositol 4,5-bisphosphate phosphodiesterase beta-4 of Homo sapiens (Human).